The primary structure comprises 511 residues: MKDKLIVFDTTLRDGEQSPGASMTREEKVRIAKALERMRVDVIEAGFPVASQGDFEAVQAVARSVRESTVCGLARALGADIDRAGEALAEAESARIHTFIATSPIHMKRKLRMEPDQVLEHAVKAVKRAREYTDDVEFSPEDAGRSEIEFLCRILEAVIAAGARTVNIPDTVGYNLPEQFAQLIRTLRERVSNSDKAIFSVHCHNDLGMAVANSLAAVMSGARQVECTINGLGERAGNAALEEVVMAVRTRQDSFPCDTNVDISQIVPTSRLVSGITGFSVQPNKAIVGANAFAHASGIHQDGVLKERQTYEIMSAEDVGWHANQMILGKHSGRNAFRARLRELGIELETEEELNAAFQRFKELADKKHVIYDEDLQALVTDANLAAENERFKLSWLKVVSETGETAIASVTLSVDSIERQASAPGSGPVDAAYKAIDSILQSNTELLLYSVNSITSGTDAQGEVTVRLKKNGRIANGQGADTDIVMASAKAYVNALNKILYPVERAYPQV.

The Pyruvate carboxyltransferase domain maps to 5–267 (LIVFDTTLRD…DTNVDISQIV (263 aa)). Aspartate 14, histidine 202, histidine 204, and asparagine 238 together coordinate Mn(2+). The tract at residues 393-511 (KLSWLKVVSE…YPVERAYPQV (119 aa)) is regulatory domain.

It belongs to the alpha-IPM synthase/homocitrate synthase family. LeuA type 1 subfamily. In terms of assembly, homodimer. The cofactor is Mn(2+).

It localises to the cytoplasm. The catalysed reaction is 3-methyl-2-oxobutanoate + acetyl-CoA + H2O = (2S)-2-isopropylmalate + CoA + H(+). It functions in the pathway amino-acid biosynthesis; L-leucine biosynthesis; L-leucine from 3-methyl-2-oxobutanoate: step 1/4. In terms of biological role, catalyzes the condensation of the acetyl group of acetyl-CoA with 3-methyl-2-oxobutanoate (2-ketoisovalerate) to form 3-carboxy-3-hydroxy-4-methylpentanoate (2-isopropylmalate). The sequence is that of 2-isopropylmalate synthase from Nitrosococcus oceani (strain ATCC 19707 / BCRC 17464 / JCM 30415 / NCIMB 11848 / C-107).